A 454-amino-acid chain; its full sequence is tRNA modification GTPase MnmE (454 aa).

(6S)-5-formyl-5,6,7,8-tetrahydrofolate is bound by residues Arg23, Glu80, and Lys120. One can recognise a TrmE-type G domain in the interval 216–377; that stretch reads GMKVVIAGRP…LRNHLKQSMG (162 aa). Asn226 contributes to the K(+) binding site. Residues 226–231, 245–251, 270–273, 335–338, and 358–360 contribute to the GTP site; these read NAGKSS, TDIAGTT, DTAG, NKAD, and SAR. A Mg(2+)-binding site is contributed by Ser230. The K(+) site is built by Thr245, Ile247, and Thr250. Thr251 lines the Mg(2+) pocket. Lys454 is a (6S)-5-formyl-5,6,7,8-tetrahydrofolate binding site.

This sequence belongs to the TRAFAC class TrmE-Era-EngA-EngB-Septin-like GTPase superfamily. TrmE GTPase family. As to quaternary structure, homodimer. Heterotetramer of two MnmE and two MnmG subunits. Requires K(+) as cofactor.

The protein resides in the cytoplasm. Its function is as follows. Exhibits a very high intrinsic GTPase hydrolysis rate. Involved in the addition of a carboxymethylaminomethyl (cmnm) group at the wobble position (U34) of certain tRNAs, forming tRNA-cmnm(5)s(2)U34. In Shigella dysenteriae serotype 1 (strain Sd197), this protein is tRNA modification GTPase MnmE.